The following is a 285-amino-acid chain: tRNA pseudouridine synthase B (285 aa).

The active-site Nucleophile is the Asp40.

This sequence belongs to the pseudouridine synthase TruB family. Type 1 subfamily.

The enzyme catalyses uridine(55) in tRNA = pseudouridine(55) in tRNA. Responsible for synthesis of pseudouridine from uracil-55 in the psi GC loop of transfer RNAs. The chain is tRNA pseudouridine synthase B from Caldanaerobacter subterraneus subsp. tengcongensis (strain DSM 15242 / JCM 11007 / NBRC 100824 / MB4) (Thermoanaerobacter tengcongensis).